A 181-amino-acid chain; its full sequence is Kappa-casein (181 aa).

The first 21 residues, 1 to 21 (MMRNFIVVVNILALTLPFLAA), serve as a signal peptide directing secretion. Position 123 is a phosphothreonine (Thr-123). Thr-134, Thr-144, and Thr-155 each carry an O-linked (GalNAc...) threonine glycan. Ser-162 carries the post-translational modification Phosphoserine; alternate. O-linked (GalNAc...) serine; alternate glycosylation is present at Ser-162. Ser-178 carries the post-translational modification Phosphoserine.

This sequence belongs to the kappa-casein family. As to expression, mammary gland specific. Secreted in milk.

It is found in the secreted. Functionally, kappa-casein stabilizes micelle formation, preventing casein precipitation in milk. The polypeptide is Kappa-casein (Csn3) (Mus musculus (Mouse)).